An 865-amino-acid polypeptide reads, in one-letter code: Protein translocase subunit SecA (865 aa).

ATP is bound by residues glutamine 93, 111 to 115 (GEGKT), and aspartate 501. Positions 841, 843, 852, and 853 each coordinate Zn(2+).

The protein belongs to the SecA family. In terms of assembly, monomer and homodimer. Part of the essential Sec protein translocation apparatus which comprises SecA, SecYEG and auxiliary proteins SecDF-YajC and YidC. Requires Zn(2+) as cofactor.

The protein localises to the cell inner membrane. Its subcellular location is the cytoplasm. It carries out the reaction ATP + H2O + cellular proteinSide 1 = ADP + phosphate + cellular proteinSide 2.. In terms of biological role, part of the Sec protein translocase complex. Interacts with the SecYEG preprotein conducting channel. Has a central role in coupling the hydrolysis of ATP to the transfer of proteins into and across the cell membrane, serving as an ATP-driven molecular motor driving the stepwise translocation of polypeptide chains across the membrane. This chain is Protein translocase subunit SecA, found in Helicobacter acinonychis (strain Sheeba).